The chain runs to 432 residues: Ribulose bisphosphate carboxylase-like protein 2 (432 aa).

Lys-198, Asp-200, and Glu-201 together coordinate Mg(2+). Lys-198 carries the post-translational modification N6-carboxylysine.

It belongs to the RuBisCO large chain family. Type IV subfamily. In terms of assembly, homodimer. Mg(2+) serves as cofactor.

May be involved in sulfur metabolism and oxidative stress response. Does not show RuBisCO activity. The sequence is that of Ribulose bisphosphate carboxylase-like protein 2 (rlp2) from Rhodopseudomonas palustris (strain ATCC BAA-98 / CGA009).